The following is a 354-amino-acid chain: MAKQAIKRAKILAVKNNNKIGVLLINLGTPDEPSVPAVRRYLRQFLSDPKVIDVPSLVRWIIVHLCILPFRPKRSAKLYQKIWMPEGSPLLVYSEMLRERVGETLGDDFCVALGMRYGKPSIETALKKLQEAQCRQLIVLPLFPQYSTSTTASALEEVRAKNSFKEMTVIDRFFEEPHYIDSMTTLIHENLNEFQPDYFLFSYHGLPERHLVKSGCQLAICNRKNNCSPISSSNENCYRAQCFETSRLIAKKLNLTDQQYGVAFQSRLGRAKWIEPYTDKYLIELSKKGIKKLMVVCPSFPVDCLETLEEIGIRAQSQWQRLGGETLKLIPSLNAHPQWVNAIAKMAKKSLQLF.

Fe cation is bound by residues H204 and E306.

This sequence belongs to the ferrochelatase family.

It localises to the cytoplasm. The enzyme catalyses heme b + 2 H(+) = protoporphyrin IX + Fe(2+). It participates in porphyrin-containing compound metabolism; protoheme biosynthesis; protoheme from protoporphyrin-IX: step 1/1. Functionally, catalyzes the ferrous insertion into protoporphyrin IX. This Coxiella burnetii (strain CbuK_Q154) (Coxiella burnetii (strain Q154)) protein is Ferrochelatase.